Here is a 302-residue protein sequence, read N- to C-terminus: Citrate lyase subunit beta (302 aa).

Positions 76 and 139 each coordinate substrate. Residues glutamate 139 and aspartate 166 each coordinate Mg(2+).

Belongs to the HpcH/HpaI aldolase family. Citrate lyase beta subunit subfamily. In terms of assembly, oligomer with a subunit composition of (alpha,beta,gamma)6. Requires Mg(2+) as cofactor.

It localises to the cytoplasm. It catalyses the reaction citrate = oxaloacetate + acetate. It carries out the reaction (3S)-citryl-CoA = oxaloacetate + acetyl-CoA. Its function is as follows. Represents a citryl-ACP lyase. This is Citrate lyase subunit beta (citE) from Escherichia coli O6:H1 (strain CFT073 / ATCC 700928 / UPEC).